A 321-amino-acid polypeptide reads, in one-letter code: Lipoyl synthase (321 aa).

Residues cysteine 68, cysteine 73, cysteine 79, cysteine 94, cysteine 98, cysteine 101, and serine 308 each contribute to the [4Fe-4S] cluster site. One can recognise a Radical SAM core domain in the interval 80 to 297 (FNHGTATFMI…KALADELGFT (218 aa)).

This sequence belongs to the radical SAM superfamily. Lipoyl synthase family. [4Fe-4S] cluster is required as a cofactor.

Its subcellular location is the cytoplasm. It carries out the reaction [[Fe-S] cluster scaffold protein carrying a second [4Fe-4S](2+) cluster] + N(6)-octanoyl-L-lysyl-[protein] + 2 oxidized [2Fe-2S]-[ferredoxin] + 2 S-adenosyl-L-methionine + 4 H(+) = [[Fe-S] cluster scaffold protein] + N(6)-[(R)-dihydrolipoyl]-L-lysyl-[protein] + 4 Fe(3+) + 2 hydrogen sulfide + 2 5'-deoxyadenosine + 2 L-methionine + 2 reduced [2Fe-2S]-[ferredoxin]. Its pathway is protein modification; protein lipoylation via endogenous pathway; protein N(6)-(lipoyl)lysine from octanoyl-[acyl-carrier-protein]: step 2/2. Functionally, catalyzes the radical-mediated insertion of two sulfur atoms into the C-6 and C-8 positions of the octanoyl moiety bound to the lipoyl domains of lipoate-dependent enzymes, thereby converting the octanoylated domains into lipoylated derivatives. In Shewanella oneidensis (strain ATCC 700550 / JCM 31522 / CIP 106686 / LMG 19005 / NCIMB 14063 / MR-1), this protein is Lipoyl synthase.